Here is a 331-residue protein sequence, read N- to C-terminus: NADH-quinone oxidoreductase subunit H (331 aa).

9 helical membrane passes run 5-25, 45-65, 78-98, 122-142, 156-176, 192-212, 245-265, 271-291, and 311-331; these read LFFV…MASL, GPDM…IKLF, FIFL…LAPV, VLYI…AGLA, VVAL…VVMV, IFNW…MASF, FFIG…LLFL, FLFI…FFFF, and WKIL…ALLI.

It belongs to the complex I subunit 1 family. NDH-1 is composed of 14 different subunits. Subunits NuoA, H, J, K, L, M, N constitute the membrane sector of the complex.

The protein resides in the cell inner membrane. It catalyses the reaction a quinone + NADH + 5 H(+)(in) = a quinol + NAD(+) + 4 H(+)(out). NDH-1 shuttles electrons from NADH, via FMN and iron-sulfur (Fe-S) centers, to quinones in the respiratory chain. The immediate electron acceptor for the enzyme in this species is believed to be ubiquinone. Couples the redox reaction to proton translocation (for every two electrons transferred, four hydrogen ions are translocated across the cytoplasmic membrane), and thus conserves the redox energy in a proton gradient. This subunit may bind ubiquinone. The chain is NADH-quinone oxidoreductase subunit H from Campylobacter concisus (strain 13826).